The chain runs to 312 residues: uncharacterized protein (312 aa).

Helical transmembrane passes span 4–24 (IFLA…KVIF), 45–65 (LITP…PLVL), 75–95 (IAGI…AVML), 117–137 (VILA…NLIW), 171–191 (GLGV…IQFL), 217–237 (TSMT…GVMI), 253–275 (AFIF…PLGI), and 280–299 (LLLI…AHTW).

It localises to the cell membrane. This is an uncharacterized protein from Bacillus subtilis (strain 168).